The primary structure comprises 568 residues: DNA ligase (568 aa).

Glu-249 lines the ATP pocket. The active-site N6-AMP-lysine intermediate is the Lys-251. Residues Arg-256, Arg-271, Glu-301, Phe-342, Arg-418, and Lys-424 each contribute to the ATP site.

It belongs to the ATP-dependent DNA ligase family. Mg(2+) is required as a cofactor.

The enzyme catalyses ATP + (deoxyribonucleotide)n-3'-hydroxyl + 5'-phospho-(deoxyribonucleotide)m = (deoxyribonucleotide)n+m + AMP + diphosphate.. DNA ligase that seals nicks in double-stranded DNA during DNA replication, DNA recombination and DNA repair. The sequence is that of DNA ligase from Methanocella arvoryzae (strain DSM 22066 / NBRC 105507 / MRE50).